We begin with the raw amino-acid sequence, 93 residues long: MISEEQVRHVAELARLGLTDEEVARMGGQLGAILDSIEKIRELDLEGVPPTANPLNLTNVFRPDEPRESLRREEALAVAPETADGMFAVPRID.

Belongs to the GatC family. Heterotrimer of A, B and C subunits.

The catalysed reaction is L-glutamyl-tRNA(Gln) + L-glutamine + ATP + H2O = L-glutaminyl-tRNA(Gln) + L-glutamate + ADP + phosphate + H(+). It carries out the reaction L-aspartyl-tRNA(Asn) + L-glutamine + ATP + H2O = L-asparaginyl-tRNA(Asn) + L-glutamate + ADP + phosphate + 2 H(+). Allows the formation of correctly charged Asn-tRNA(Asn) or Gln-tRNA(Gln) through the transamidation of misacylated Asp-tRNA(Asn) or Glu-tRNA(Gln) in organisms which lack either or both of asparaginyl-tRNA or glutaminyl-tRNA synthetases. The reaction takes place in the presence of glutamine and ATP through an activated phospho-Asp-tRNA(Asn) or phospho-Glu-tRNA(Gln). The chain is Aspartyl/glutamyl-tRNA(Asn/Gln) amidotransferase subunit C from Rubrobacter xylanophilus (strain DSM 9941 / JCM 11954 / NBRC 16129 / PRD-1).